Consider the following 360-residue polypeptide: Putative F-box protein At1g65770 (360 aa).

Positions 2–50 (ADWSTLPVDLLNMIAGRLFSNIELKRFRSICRSWRSSVPGAGKKNPFRT) constitute an F-box domain.

In Arabidopsis thaliana (Mouse-ear cress), this protein is Putative F-box protein At1g65770.